Consider the following 478-residue polypeptide: Noelin-3 (478 aa).

The first 23 residues, 1–23 (MSPPLLKLGAVLSTMAMISNWMS), serve as a signal peptide directing secretion. 5 N-linked (GlcNAc...) asparagine glycosylation sites follow: Asn-33, Asn-95, Asn-179, Asn-299, and Asn-465. Positions 77 to 217 (CSRDAKSRQL…TRLRDCMKKL (141 aa)) form a coiled coil. The Olfactomedin-like domain maps to 218–470 (TCGKLMKITG…QVLFNVTLFH (253 aa)). The cysteines at positions 219 and 401 are disulfide-linked.

In terms of assembly, peripherally associated with AMPAR complex. AMPAR complex consists of an inner core made of 4 pore-forming GluA/GRIA proteins (GRIA1, GRIA2, GRIA3 and GRIA4) and 4 major auxiliary subunits arranged in a twofold symmetry. One of the two pairs of distinct binding sites is occupied either by CNIH2, CNIH3 or CACNG2, CACNG3. The other harbors CACNG2, CACNG3, CACNG4, CACNG8 or GSG1L. This inner core of AMPAR complex is complemented by outer core constituents binding directly to the GluA/GRIA proteins at sites distinct from the interaction sites of the inner core constituents. Outer core constituents include at least PRRT1, PRRT2, CKAMP44/SHISA9, FRRS1L and NRN1. The proteins of the inner and outer core serve as a platform for other, more peripherally associated AMPAR constituents, including OLFM3. Alone or in combination, these auxiliary subunits control the gating and pharmacology of the AMPAR complex and profoundly impact their biogenesis and protein processing. Homodimer. Interacts with MYOC. Interacts with OLFM2. In the eye, expressed in trabecular meshwork and neural retina; in non-ocular tissues, expressed in brain and lung.

The protein resides in the secreted. The protein localises to the synapse. This chain is Noelin-3 (OLFM3), found in Homo sapiens (Human).